Here is a 474-residue protein sequence, read N- to C-terminus: Lipoprotein lipase (474 aa).

The signal sequence occupies residues methionine 1–alanine 27. Residues arginine 32–threonine 53 are interaction with GPIHBP1. A disulfide bridge connects residues cysteine 54 and cysteine 67. N-linked (GlcNAc...) asparagine glycosylation is present at asparagine 70. The residue at position 121 (tyrosine 121) is a 3'-nitrotyrosine. The Nucleophile role is filled by serine 159. The Charge relay system role is filled by aspartate 183. Tyrosine 191 is subject to 3'-nitrotyrosine. Ca(2+) is bound by residues alanine 194, arginine 197, serine 199, and aspartate 202. An intrachain disulfide couples cysteine 243 to cysteine 266. The interval cysteine 243–cysteine 266 is essential for determining substrate specificity. The active-site Charge relay system is the histidine 268. Disulfide bonds link cysteine 291–cysteine 310 and cysteine 302–cysteine 305. In terms of domain architecture, PLAT spans phenylalanine 341–lysine 464. Residue tyrosine 343 is modified to 3'-nitrotyrosine. N-linked (GlcNAc...) asparagine glycosylation is present at asparagine 386. The tract at residues tryptophan 417–tryptophan 421 is important for interaction with lipoprotein particles. Residues arginine 430 to lysine 434 are important for heparin binding. The tract at residues isoleucine 443 to aspartate 467 is interaction with GPIHBP1. Cysteine 445 and cysteine 465 are joined by a disulfide.

It belongs to the AB hydrolase superfamily. Lipase family. In terms of assembly, homodimer. Interacts with GPIHBP1 with 1:1 stoichiometry. Interacts with APOC2; the interaction activates LPL activity in the presence of lipids. Interaction with heparan sulfate proteoglycans is required to protect LPL against loss of activity. Associates with lipoprotein particles in blood plasma. Interacts with LMF1 and SEL1L; interaction with SEL1L is required to prevent aggregation of newly synthesized LPL in the endoplasmic reticulum (ER), and for normal export of LPL from the ER to the extracellular space. Interacts with SORL1; SORL1 acts as a sorting receptor, promoting LPL localization to endosomes and later to lysosomes, leading to degradation of newly synthesized LPL. Tyrosine nitration after lipopolysaccharide (LPS) challenge down-regulates the lipase activity. In terms of processing, N-glycosylated. As to expression, detected in white and brown adipose tissue and heart muscle, especially at the lumenal surface of capillaries. Detected on capillary endothelium in the lactating mammary gland. Detected in blood plasma (at protein level). Expressed in liver, epididymal fat, heart, psoas muscle, lactating mammary gland, adrenal, lung, and ovary. Highest levels in heart and adrenal gland.

It is found in the cell membrane. The protein resides in the secreted. Its subcellular location is the extracellular space. The protein localises to the extracellular matrix. It catalyses the reaction a triacylglycerol + H2O = a diacylglycerol + a fatty acid + H(+). The enzyme catalyses a 1,2-diacyl-sn-glycero-3-phosphocholine + H2O = a 2-acyl-sn-glycero-3-phosphocholine + a fatty acid + H(+). The catalysed reaction is 1,2,3-tri-(9Z-octadecenoyl)-glycerol + H2O = di-(9Z)-octadecenoylglycerol + (9Z)-octadecenoate + H(+). It carries out the reaction 1,2-di-(9Z-octadecenoyl)-sn-glycero-3-phosphocholine + H2O = (9Z-octadecenoyl)-sn-glycero-3-phosphocholine + (9Z)-octadecenoate + H(+). It catalyses the reaction 1,2,3-tributanoylglycerol + H2O = dibutanoylglycerol + butanoate + H(+). The enzyme catalyses 1,2-dihexadecanoyl-sn-glycero-3-phosphocholine + H2O = hexadecanoyl-sn-glycero-3-phosphocholine + hexadecanoate + H(+). Its activity is regulated as follows. The apolipoprotein APOC2 acts as a coactivator of LPL activity. Ca(2+) binding promotes protein stability and formation of the active homodimer. Interaction with GPIHBP1 protects LPL against inactivation by ANGPTL4. Functionally, key enzyme in triglyceride metabolism. Catalyzes the hydrolysis of triglycerides from circulating chylomicrons and very low density lipoproteins (VLDL), and thereby plays an important role in lipid clearance from the blood stream, lipid utilization and storage. Although it has both phospholipase and triglyceride lipase activities it is primarily a triglyceride lipase with low but detectable phospholipase activity. Mediates margination of triglyceride-rich lipoprotein particles in capillaries. Recruited to its site of action on vascular endothelium by binding to GPIHBP1 and cell surface heparan sulfate proteoglycans. This Mus musculus (Mouse) protein is Lipoprotein lipase (Lpl).